Reading from the N-terminus, the 547-residue chain is Probable protein kinase UbiB (547 aa).

The region spanning 121-501 (EFSPDPMASA…QLRSERRWRR (381 aa)) is the Protein kinase domain. Residues 127–135 (MASASVAQV) and Lys-149 each bind ATP. Residue Asp-284 is the Proton acceptor of the active site. 2 consecutive transmembrane segments (helical) span residues 502-522 (GFIA…HAGQ) and 523-543 (WLAD…GVML).

This sequence belongs to the ABC1 family. UbiB subfamily.

The protein localises to the cell inner membrane. The protein operates within cofactor biosynthesis; ubiquinone biosynthesis [regulation]. Its function is as follows. Is probably a protein kinase regulator of UbiI activity which is involved in aerobic coenzyme Q (ubiquinone) biosynthesis. The sequence is that of Probable protein kinase UbiB from Marinobacter nauticus (strain ATCC 700491 / DSM 11845 / VT8) (Marinobacter aquaeolei).